The primary structure comprises 333 residues: N-acetyl-gamma-glutamyl-phosphate reductase (333 aa).

C136 is an active-site residue.

It belongs to the NAGSA dehydrogenase family. Type 1 subfamily.

The protein resides in the cytoplasm. It catalyses the reaction N-acetyl-L-glutamate 5-semialdehyde + phosphate + NADP(+) = N-acetyl-L-glutamyl 5-phosphate + NADPH + H(+). Its pathway is amino-acid biosynthesis; L-arginine biosynthesis; N(2)-acetyl-L-ornithine from L-glutamate: step 3/4. Its function is as follows. Catalyzes the NADPH-dependent reduction of N-acetyl-5-glutamyl phosphate to yield N-acetyl-L-glutamate 5-semialdehyde. This chain is N-acetyl-gamma-glutamyl-phosphate reductase, found in Xylella fastidiosa (strain 9a5c).